The primary structure comprises 325 residues: ATPase ASNA1 homolog 2 (325 aa).

22 to 29 (KGGVGKTT) is an ATP binding site. Aspartate 51 is a catalytic residue. ATP contacts are provided by glutamate 231 and asparagine 258. Residues cysteine 267 and cysteine 270 each coordinate Zn(2+).

The protein belongs to the arsA ATPase family. In terms of assembly, homodimer.

It localises to the cytoplasm. The protein resides in the endoplasmic reticulum. Its function is as follows. ATPase required for the post-translational delivery of tail-anchored (TA) proteins to the endoplasmic reticulum. Recognizes and selectively binds the transmembrane domain of TA proteins in the cytosol. This complex then targets to the endoplasmic reticulum by membrane-bound receptors, where the tail-anchored protein is released for insertion. This process is regulated by ATP binding and hydrolysis. ATP binding drives the homodimer towards the closed dimer state, facilitating recognition of newly synthesized TA membrane proteins. ATP hydrolysis is required for insertion. Subsequently, the homodimer reverts towards the open dimer state, lowering its affinity for the membrane-bound receptor, and returning it to the cytosol to initiate a new round of targeting. This is ATPase ASNA1 homolog 2 from Paramecium tetraurelia.